The following is a 151-amino-acid chain: 16.9 kDa class I heat shock protein 1 (151 aa).

The 115-residue stretch at 37–151 (ETAAFANARV…PEVKAIEISG (115 aa)) folds into the sHSP domain.

The protein belongs to the small heat shock protein (HSP20) family. In terms of assembly, may form oligomeric structures.

It is found in the cytoplasm. The chain is 16.9 kDa class I heat shock protein 1 (hsp16.9A) from Triticum aestivum (Wheat).